The sequence spans 471 residues: Coronin-6 (471 aa).

WD repeat units lie at residues 79 to 119 (GHTG…PVRN), 129 to 169 (GHSK…VLLS), 173 to 212 (IHPD…VVAE), 216 to 259 (PHEG…EPVA), and 264 to 304 (DTSN…PFVH). Residues 410-433 (ILDVRPPASPRRSQSASEAPLSQH) are disordered. Low complexity predominate over residues 419 to 429 (PRRSQSASEAP). Residues 426-468 (SEAPLSQHTLETLLEEIKALRDRVQAQEERITALENMLCELVD) adopt a coiled-coil conformation.

In Mus musculus (Mouse), this protein is Coronin-6 (Coro6).